We begin with the raw amino-acid sequence, 126 residues long: MRHRKSGRQLNRNSSHRKAMFSNMASSLVRHEVIKTTLPKAKELRRVVEPLITLAKTDSVANRRLAFARTRDNEVVAKLFNELGPRFAARQGGYTRILKAGFRAGDKAPMAYIELVDRPAAEEAAE.

Belongs to the bacterial ribosomal protein bL17 family. Part of the 50S ribosomal subunit. Contacts protein L32.

The chain is Large ribosomal subunit protein bL17 from Vibrio parahaemolyticus serotype O3:K6 (strain RIMD 2210633).